We begin with the raw amino-acid sequence, 442 residues long: ATP-dependent RNA helicase SUB2 (442 aa).

Residues 59 to 87 (TGFRDFLLKGELLRAITDCGFEHPSEVQQ) carry the Q motif motif. The Helicase ATP-binding domain occupies 90–265 (IPTAILNVDV…KKFMRNPLEV (176 aa)). 103-110 (AKSGLGKT) provides a ligand contact to ATP. Positions 212–215 (DECD) match the DECD box motif. A Helicase C-terminal domain is found at 293 to 438 (KLNELLDSLE…EYPQGGVDSS (146 aa)).

The protein belongs to the DEAD box helicase family. DECD subfamily.

It is found in the nucleus. The enzyme catalyses ATP + H2O = ADP + phosphate + H(+). Functionally, ATP-binding RNA helicase involved in transcription elongation and required for the export of mRNA out of the nucleus. SUB2 also plays a role in pre-mRNA splicing and spliceosome assembly. May be involved in rDNA and telomeric silencing, and maintenance of genome integrity. This chain is ATP-dependent RNA helicase SUB2 (SUB2), found in Ajellomyces capsulatus (strain NAm1 / WU24) (Darling's disease fungus).